A 135-amino-acid chain; its full sequence is Gene 52 protein (135 aa).

Disordered regions lie at residues 1–20 (MASGGGGGSKRCPKKQPTPE) and 110–135 (LGGRASSDSSKASKPRGRSKHRAEKQ). Residues 122–135 (SKPRGRSKHRAEKQ) show a composition bias toward basic residues.

It belongs to the herpesviridae BLRF2 family.

The protein is Gene 52 protein (52) of Equine herpesvirus 2 (strain 86/87) (EHV-2).